Reading from the N-terminus, the 313-residue chain is Porphobilinogen deaminase (313 aa).

C242 carries the post-translational modification S-(dipyrrolylmethanemethyl)cysteine.

The protein belongs to the HMBS family. As to quaternary structure, monomer. Dipyrromethane serves as cofactor.

It catalyses the reaction 4 porphobilinogen + H2O = hydroxymethylbilane + 4 NH4(+). Its pathway is porphyrin-containing compound metabolism; protoporphyrin-IX biosynthesis; coproporphyrinogen-III from 5-aminolevulinate: step 2/4. Tetrapolymerization of the monopyrrole PBG into the hydroxymethylbilane pre-uroporphyrinogen in several discrete steps. This Pseudomonas aeruginosa (strain LESB58) protein is Porphobilinogen deaminase.